A 317-amino-acid polypeptide reads, in one-letter code: Beta-ketoacyl-[acyl-carrier-protein] synthase III (317 aa).

Residues C112 and H244 contribute to the active site. An ACP-binding region spans residues 245-249 (QANIR). N274 is an active-site residue.

It belongs to the thiolase-like superfamily. FabH family. In terms of assembly, homodimer.

It is found in the cytoplasm. The catalysed reaction is malonyl-[ACP] + acetyl-CoA + H(+) = 3-oxobutanoyl-[ACP] + CO2 + CoA. It participates in lipid metabolism; fatty acid biosynthesis. Functionally, catalyzes the condensation reaction of fatty acid synthesis by the addition to an acyl acceptor of two carbons from malonyl-ACP. Catalyzes the first condensation reaction which initiates fatty acid synthesis and may therefore play a role in governing the total rate of fatty acid production. Possesses both acetoacetyl-ACP synthase and acetyl transacylase activities. Its substrate specificity determines the biosynthesis of branched-chain and/or straight-chain of fatty acids. This is Beta-ketoacyl-[acyl-carrier-protein] synthase III from Rickettsia felis (strain ATCC VR-1525 / URRWXCal2) (Rickettsia azadi).